The following is a 379-amino-acid chain: Chaperone protein DnaJ (379 aa).

The J domain maps to 5-70 (DYYEVLGLSK…EKKAMYDQYG (66 aa)). The CR-type zinc finger occupies 136–214 (GCKKDIRIHT…CHGDGRVHKA (79 aa)). Zn(2+)-binding residues include cysteine 149, cysteine 152, cysteine 166, cysteine 169, cysteine 188, cysteine 191, cysteine 202, and cysteine 205. CXXCXGXG motif repeat units follow at residues 149–156 (CDTCHGTG), 166–173 (CSHCHGSG), 188–195 (CPSCHGTG), and 202–209 (CRSCHGDG).

This sequence belongs to the DnaJ family. Homodimer. The cofactor is Zn(2+).

The protein localises to the cytoplasm. Functionally, participates actively in the response to hyperosmotic and heat shock by preventing the aggregation of stress-denatured proteins and by disaggregating proteins, also in an autonomous, DnaK-independent fashion. Unfolded proteins bind initially to DnaJ; upon interaction with the DnaJ-bound protein, DnaK hydrolyzes its bound ATP, resulting in the formation of a stable complex. GrpE releases ADP from DnaK; ATP binding to DnaK triggers the release of the substrate protein, thus completing the reaction cycle. Several rounds of ATP-dependent interactions between DnaJ, DnaK and GrpE are required for fully efficient folding. Also involved, together with DnaK and GrpE, in the DNA replication of plasmids through activation of initiation proteins. In Mannheimia haemolytica (Pasteurella haemolytica), this protein is Chaperone protein DnaJ.